The following is a 415-amino-acid chain: Lipid-A-disaccharide synthase (415 aa).

The tract at residues 1–21 (MNSLPESGSDGQSSADPSQKA) is disordered.

Belongs to the LpxB family.

The catalysed reaction is a lipid X + a UDP-2-N,3-O-bis[(3R)-3-hydroxyacyl]-alpha-D-glucosamine = a lipid A disaccharide + UDP + H(+). It participates in bacterial outer membrane biogenesis; LPS lipid A biosynthesis. Functionally, condensation of UDP-2,3-diacylglucosamine and 2,3-diacylglucosamine-1-phosphate to form lipid A disaccharide, a precursor of lipid A, a phosphorylated glycolipid that anchors the lipopolysaccharide to the outer membrane of the cell. In Gluconobacter oxydans (strain 621H) (Gluconobacter suboxydans), this protein is Lipid-A-disaccharide synthase.